A 336-amino-acid polypeptide reads, in one-letter code: NADH-quinone oxidoreductase subunit H (336 aa).

8 consecutive transmembrane segments (helical) span residues 9 to 29 (LVWI…LTYA), 77 to 97 (FLFA…VIPF), 116 to 136 (LGVM…IIAG), 156 to 176 (ISYE…TGSL), 188 to 208 (LPYW…VSIL), 236 to 256 (IPFA…SSIM), 275 to 295 (IVPG…CFLI), and 315 to 335 (VFLP…AFNI).

This sequence belongs to the complex I subunit 1 family. NDH-1 is composed of 14 different subunits. Subunits NuoA, H, J, K, L, M, N constitute the membrane sector of the complex.

The protein localises to the cell inner membrane. It carries out the reaction a quinone + NADH + 5 H(+)(in) = a quinol + NAD(+) + 4 H(+)(out). Functionally, NDH-1 shuttles electrons from NADH, via FMN and iron-sulfur (Fe-S) centers, to quinones in the respiratory chain. The immediate electron acceptor for the enzyme in this species is believed to be ubiquinone. Couples the redox reaction to proton translocation (for every two electrons transferred, four hydrogen ions are translocated across the cytoplasmic membrane), and thus conserves the redox energy in a proton gradient. This subunit may bind ubiquinone. The polypeptide is NADH-quinone oxidoreductase subunit H (Neorickettsia sennetsu (strain ATCC VR-367 / Miyayama) (Ehrlichia sennetsu)).